The chain runs to 233 residues: Clathrin light chain (233 aa).

The segment at 1 to 124 is disordered; it reads MSEKFPPLED…EDRSEVVDQW (124 aa). The span at 17–43 shows a compositional bias: basic and acidic residues; that stretch reads PNDKKDDDTDFLKREAEILGDEFKTEQ. Thr-49 is subject to Phosphothreonine. Phosphoserine is present on Ser-52. Residues 56–67 show a composition bias toward acidic residues; it reads DDDEIRDFEEQF. Residues 69-92 are compositionally biased toward polar residues; it reads DINSANGAVSSDQNGSATVSSGND. Positions 112–124 are enriched in basic and acidic residues; that stretch reads SVKEDRSEVVDQW. A coiled-coil region spans residues 125–186; sequence KQRRAVEIHE…EAFLKKRDEF (62 aa). An involved in binding clathrin heavy chain region spans residues 144 to 204; it reads KELQDEAIKH…DRALQLINQD (61 aa).

The protein belongs to the clathrin light chain family. As to quaternary structure, clathrin coats are formed from molecules containing 3 heavy chains and 3 light chains. Interacts with the auxilin-like clathrin uncoating factor SWA2.

It localises to the cytoplasmic vesicle membrane. Its subcellular location is the membrane. The protein resides in the coated pit. Its function is as follows. Clathrin is the major protein of the polyhedral coat of coated pits and vesicles. In yeast, it is involved in the retention of proteins in an intracellular membrane compartment, presumably the trans-Golgi. The yeast light chain is important for cell growth. The light chain may help to properly orient the assembly/ disassembly of the clathrin coats. The sequence is that of Clathrin light chain (CLC1) from Saccharomyces cerevisiae (strain ATCC 204508 / S288c) (Baker's yeast).